The sequence spans 188 residues: Molybdopterin synthase catalytic subunit (188 aa).

Phosphoserine is present on S20. Substrate contacts are provided by residues 143 to 144 (HR), K159, and 166 to 168 (KKE).

This sequence belongs to the MoaE family. MOCS2B subfamily. Heterotetramer; composed of 2 small (MOCS2A) and 2 large (MOCS2B) subunits. In terms of tissue distribution, highest levels are found in heart and skeletal muscle. Lower levels are present in brain, kidney and pancreas. Very low levels are found in lung and peripheral blood leukocytes.

Its subcellular location is the cytoplasm. The protein resides in the cytosol. The catalysed reaction is 2 [molybdopterin-synthase sulfur-carrier protein]-C-terminal-Gly-aminoethanethioate + cyclic pyranopterin phosphate + H2O = molybdopterin + 2 [molybdopterin-synthase sulfur-carrier protein]-C-terminal Gly-Gly + 2 H(+). The protein operates within cofactor biosynthesis; molybdopterin biosynthesis. Functionally, catalytic subunit of the molybdopterin synthase complex, a complex that catalyzes the conversion of precursor Z into molybdopterin. Acts by mediating the incorporation of 2 sulfur atoms from thiocarboxylated MOCS2A into precursor Z to generate a dithiolene group. The sequence is that of Molybdopterin synthase catalytic subunit from Homo sapiens (Human).